A 520-amino-acid chain; its full sequence is 2-isopropylmalate synthase (520 aa).

Positions 4–266 constitute a Pyruvate carboxyltransferase domain; the sequence is VEFLDTTLRD…TSDIVLNETV (263 aa). Aspartate 13, histidine 201, histidine 203, and asparagine 237 together coordinate Mn(2+). The interval 390–520 is regulatory domain; it reads HFGDLKLTSN…AVSFRDVPTN (131 aa).

It belongs to the alpha-IPM synthase/homocitrate synthase family. LeuA type 1 subfamily. As to quaternary structure, homodimer. The cofactor is Mn(2+).

The protein localises to the cytoplasm. It catalyses the reaction 3-methyl-2-oxobutanoate + acetyl-CoA + H2O = (2S)-2-isopropylmalate + CoA + H(+). The protein operates within amino-acid biosynthesis; L-leucine biosynthesis; L-leucine from 3-methyl-2-oxobutanoate: step 1/4. Its function is as follows. Catalyzes the condensation of the acetyl group of acetyl-CoA with 3-methyl-2-oxobutanoate (2-ketoisovalerate) to form 3-carboxy-3-hydroxy-4-methylpentanoate (2-isopropylmalate). The sequence is that of 2-isopropylmalate synthase from Streptococcus gallolyticus (strain UCN34).